The following is a 368-amino-acid chain: Agmatine deiminase (368 aa).

Cysteine 357 functions as the Amidino-cysteine intermediate in the catalytic mechanism.

The protein belongs to the agmatine deiminase family. As to quaternary structure, homodimer.

It catalyses the reaction agmatine + H2O = N-carbamoylputrescine + NH4(+). It functions in the pathway amine and polyamine biosynthesis; putrescine biosynthesis via agmatine pathway; N-carbamoylputrescine from agmatine: step 1/1. Mediates the hydrolysis of agmatine into N-carbamoylputrescine in the arginine decarboxylase (ADC) pathway of putrescine biosynthesis, a basic polyamine. This chain is Agmatine deiminase, found in Stutzerimonas stutzeri (strain A1501) (Pseudomonas stutzeri).